The following is a 336-amino-acid chain: Lipoyl synthase (336 aa).

Residues cysteine 81, cysteine 86, cysteine 92, cysteine 107, cysteine 111, cysteine 114, and serine 323 each coordinate [4Fe-4S] cluster. The region spanning 93–312 (FGHGTATFMI…EDYGYELGFS (220 aa)) is the Radical SAM core domain.

It belongs to the radical SAM superfamily. Lipoyl synthase family. It depends on [4Fe-4S] cluster as a cofactor.

Its subcellular location is the cytoplasm. It carries out the reaction [[Fe-S] cluster scaffold protein carrying a second [4Fe-4S](2+) cluster] + N(6)-octanoyl-L-lysyl-[protein] + 2 oxidized [2Fe-2S]-[ferredoxin] + 2 S-adenosyl-L-methionine + 4 H(+) = [[Fe-S] cluster scaffold protein] + N(6)-[(R)-dihydrolipoyl]-L-lysyl-[protein] + 4 Fe(3+) + 2 hydrogen sulfide + 2 5'-deoxyadenosine + 2 L-methionine + 2 reduced [2Fe-2S]-[ferredoxin]. It participates in protein modification; protein lipoylation via endogenous pathway; protein N(6)-(lipoyl)lysine from octanoyl-[acyl-carrier-protein]: step 2/2. In terms of biological role, catalyzes the radical-mediated insertion of two sulfur atoms into the C-6 and C-8 positions of the octanoyl moiety bound to the lipoyl domains of lipoate-dependent enzymes, thereby converting the octanoylated domains into lipoylated derivatives. This is Lipoyl synthase from Stenotrophomonas maltophilia (strain K279a).